The following is a 190-amino-acid chain: A-type ATP synthase subunit E (190 aa).

This sequence belongs to the V-ATPase E subunit family. In terms of assembly, has multiple subunits with at least A(3), B(3), C, D, E, F, H, I and proteolipid K(x).

Its subcellular location is the cell membrane. Its function is as follows. Component of the A-type ATP synthase that produces ATP from ADP in the presence of a proton gradient across the membrane. The protein is A-type ATP synthase subunit E of Pyrobaculum islandicum (strain DSM 4184 / JCM 9189 / GEO3).